The sequence spans 381 residues: Lipid-A-disaccharide synthase (381 aa).

Belongs to the LpxB family.

It catalyses the reaction a lipid X + a UDP-2-N,3-O-bis[(3R)-3-hydroxyacyl]-alpha-D-glucosamine = a lipid A disaccharide + UDP + H(+). Its pathway is bacterial outer membrane biogenesis; LPS lipid A biosynthesis. Functionally, condensation of UDP-2,3-diacylglucosamine and 2,3-diacylglucosamine-1-phosphate to form lipid A disaccharide, a precursor of lipid A, a phosphorylated glycolipid that anchors the lipopolysaccharide to the outer membrane of the cell. This chain is Lipid-A-disaccharide synthase, found in Rickettsia bellii (strain OSU 85-389).